Here is a 183-residue protein sequence, read N- to C-terminus: Streptavidin (183 aa).

The first 24 residues, 1–24 (MRKIVVAAIAVSLTTVSITASASA), serve as a signal peptide directing secretion. An Avidin-like domain is found at 37-159 (AEAGITGTWY…GHDTFTKVKP (123 aa)). The biotin site is built by Tyr-67 and Tyr-78. Residues 83–85 (RYD) carry the Cell attachment site; atypical motif. Residues Trp-116, Trp-132, and Trp-144 each contribute to the biotin site.

This sequence belongs to the avidin/streptavidin family. In terms of assembly, homotetramer.

Its subcellular location is the secreted. Its function is as follows. The biological function of streptavidin is not known. Forms a strong non-covalent specific complex with biotin (one molecule of biotin per subunit of streptavidin). The protein is Streptavidin of Streptomyces avidinii.